The sequence spans 1321 residues: Lysine-specific demethylase 3A (1321 aa).

2 positions are modified to phosphoserine: Ser264 and Ser325. Disordered regions lie at residues 307 to 336, 383 to 402, and 438 to 472; these read ATPP…IPQG, LTEP…QENR, and KHLE…GKKV. Residues 316–327 are compositionally biased toward polar residues; the sequence is QQSTPQAANSPP. A Phosphoserine modification is found at Ser445. A C6-type zinc finger spans residues 662–687; it reads CDVCDTTIFNLHWVCPRCGFGVCVDC. Residue Ser766 is modified to Phosphoserine. Positions 885 to 889 match the LXXLL motif motif; the sequence is LRNLL. Lys895 carries the post-translational modification N6-acetyllysine. The 224-residue stretch at 1058 to 1281 folds into the JmjC domain; that stretch reads MPSRFDDLMA…HCFWLTQEFR (224 aa). His1120, Asp1122, and His1249 together coordinate Fe cation.

This sequence belongs to the JHDM2 histone demethylase family. As to quaternary structure, interacts with VRK1. Requires Fe(2+) as cofactor.

Its subcellular location is the cytoplasm. It is found in the nucleus. The catalysed reaction is N(6),N(6)-dimethyl-L-lysyl(9)-[histone H3] + 2 2-oxoglutarate + 2 O2 = L-lysyl(9)-[histone H3] + 2 formaldehyde + 2 succinate + 2 CO2. Its function is as follows. Histone demethylase that specifically demethylates 'Lys-9' of histone H3, thereby playing a central role in histone code. Preferentially demethylates mono- and dimethylated H3 'Lys-9' residue, with a preference for dimethylated residue, while it has weak or no activity on trimethylated H3 'Lys-9'. Demethylation of Lys residue generates formaldehyde and succinate. Involved in hormone-dependent transcriptional activation, by participating in recruitment to androgen-receptor target genes, resulting in H3 'Lys-9' demethylation and transcriptional activation. Involved in spermatogenesis by regulating expression of target genes such as PRM1 and TNP1 which are required for packaging and condensation of sperm chromatin. Involved in obesity resistance through regulation of metabolic genes such as PPARA and UCP1. The polypeptide is Lysine-specific demethylase 3A (KDM3A) (Homo sapiens (Human)).